Reading from the N-terminus, the 100-residue chain is Urease subunit gamma (100 aa).

This sequence belongs to the urease gamma subunit family. In terms of assembly, heterotrimer of UreA (gamma), UreB (beta) and UreC (alpha) subunits. Three heterotrimers associate to form the active enzyme.

It localises to the cytoplasm. It carries out the reaction urea + 2 H2O + H(+) = hydrogencarbonate + 2 NH4(+). It functions in the pathway nitrogen metabolism; urea degradation; CO(2) and NH(3) from urea (urease route): step 1/1. The chain is Urease subunit gamma from Shewanella halifaxensis (strain HAW-EB4).